The primary structure comprises 122 residues: Nitrogen fixation nifHD region GlnB-like protein 2 (122 aa).

The protein belongs to the P(II) protein family.

Could be involved in the regulation of nitrogen fixation. This is Nitrogen fixation nifHD region GlnB-like protein 2 (glnBB) from Methanobacterium ivanovii.